Here is a 2253-residue protein sequence, read N- to C-terminus: Protein Ycf2 (2253 aa).

1600–1607 (GFIGTGRS) contacts ATP.

This sequence belongs to the Ycf2 family.

The protein localises to the plastid. It is found in the chloroplast stroma. Functionally, probable ATPase of unknown function. Its presence in a non-photosynthetic plant (Epifagus virginiana) and experiments in tobacco indicate that it has an essential function which is probably not related to photosynthesis. The polypeptide is Protein Ycf2 (Nymphaea alba (White water-lily)).